Consider the following 148-residue polypeptide: Putative nickel-responsive regulator (148 aa).

Histidine 88, histidine 99, histidine 101, and cysteine 107 together coordinate Ni(2+).

It belongs to the transcriptional regulatory CopG/NikR family. Ni(2+) is required as a cofactor.

Transcriptional regulator. The chain is Putative nickel-responsive regulator from Helicobacter pylori (strain P12).